The primary structure comprises 400 residues: tRNA(Met) cytidine acetate ligase (400 aa).

ATP contacts are provided by residues 7-20 (IVEY…HQYH), G101, N162, and R187.

The protein belongs to the TmcAL family.

Its subcellular location is the cytoplasm. It catalyses the reaction cytidine(34) in elongator tRNA(Met) + acetate + ATP = N(4)-acetylcytidine(34) in elongator tRNA(Met) + AMP + diphosphate. Functionally, catalyzes the formation of N(4)-acetylcytidine (ac(4)C) at the wobble position of elongator tRNA(Met), using acetate and ATP as substrates. First activates an acetate ion to form acetyladenylate (Ac-AMP) and then transfers the acetyl group to tRNA to form ac(4)C34. The chain is tRNA(Met) cytidine acetate ligase from Oceanobacillus iheyensis (strain DSM 14371 / CIP 107618 / JCM 11309 / KCTC 3954 / HTE831).